The primary structure comprises 261 residues: tRNA (guanine-N(7)-)-methyltransferase (261 aa).

S-adenosyl-L-methionine is bound by residues Glu75, Glu100, Asp127, and Asp150. Residue Asp150 is part of the active site. Lys154 lines the substrate pocket. Positions 156-161 are interaction with RNA; it reads RHNKRR. Residues Asp186 and 223 to 226 contribute to the substrate site; that span reads THFE.

The protein belongs to the class I-like SAM-binding methyltransferase superfamily. TrmB family.

The catalysed reaction is guanosine(46) in tRNA + S-adenosyl-L-methionine = N(7)-methylguanosine(46) in tRNA + S-adenosyl-L-homocysteine. Its pathway is tRNA modification; N(7)-methylguanine-tRNA biosynthesis. Its function is as follows. Catalyzes the formation of N(7)-methylguanine at position 46 (m7G46) in tRNA. This chain is tRNA (guanine-N(7)-)-methyltransferase, found in Xanthomonas campestris pv. campestris (strain 8004).